We begin with the raw amino-acid sequence, 524 residues long: Sterol O-acyltransferase 2 (524 aa).

The tract at residues 1–31 (MEPKAPQLRRRERQGEEQENGACGEGNTRTH) is disordered. Topologically, residues 1 to 118 (MEPKAPQLRR…LDELMGVQHF (118 aa)) are cytoplasmic. His117 is a binding site for cholesterol. Residues 119-140 (RTIYHMFIAGLCVLIISTLAID) form a helical membrane-spanning segment. Over 141–160 (FIDEGRLMLEFDLLLFSFGQ) the chain is Lumenal. Residues 161–186 (LPLALMMWVPMFLSTLLLPYQTLRLW) traverse the membrane as a helical segment. Topologically, residues 187–198 (ARPRSGGAWTLG) are cytoplasmic. Residues 199-222 (ASLGCVLLAAHAAVLCVLPVHVSV) traverse the membrane as a helical segment. Residues 223–230 (KHELPPAS) are Lumenal-facing. Residues 231–254 (RCVLVFEQVRFLMKSYSFLRETVP) traverse the membrane as a helical segment. Over 255 to 295 (GIFCVRGGKGICTPSFSSYLYFLFCPTLIYRETYPRTPSIR) the chain is Cytoplasmic. Residue Cys279 is modified to Cysteine sulfenic acid (-SOH); alternate. Cys279 is covalently cross-linked (Glycyl cysteine thioester (Cys-Gly) (interchain with G-Cter in ubiquitin); alternate). The chain crosses the membrane as a helical span at residues 296–328 (WNYVAKNFAQALGCLLYACFILGRLCVPVFANM). Residues 329 to 345 (SREPFSTRALLLSILHA) are Lumenal-facing. Residues 346-371 (TGPGIFMLLLIFFAFLHCWLNAFAEM) form a helical membrane-spanning segment. At 372–419 (LRFGDRMFYRDWWNSTSFSNYYRTWNVVVHDWLYSYVYQDGLWLLGRQ) the chain is on the cytoplasmic side. The FYXDWWN motif signature appears at 379–385 (FYRDWWN). Positions 391, 394, 397, 401, 409, and 432 each coordinate an acyl-CoA. A helical membrane pass occupies residues 420–444 (GRGAAMLGVFLVSALVHEYIFCFVL). His436 is a catalytic residue. The Lumenal segment spans residues 445 to 450 (GFFYPV). Residues 451–466 (MLILFLVVGGLLNFTM) form a helical membrane-spanning segment. Topologically, residues 467–472 (NDRHTG) are cytoplasmic. A helical transmembrane segment spans residues 473–504 (PAWNILMWTFLFLGQGIQVSLYCQEWYARRHC). Over 505 to 524 (PLPQPTFWELVTPRSWSCHP) the chain is Lumenal.

The protein belongs to the membrane-bound acyltransferase family. Sterol o-acyltransferase subfamily. In terms of assembly, may form homo- or heterodimers. Interacts with INSIG1; the interaction is direct and promotes association with AMFR/gp78. In terms of processing, polyubiquitinated by AMFR/gp78 at Cys-279, leading to its degradation when the lipid levels are low. Association with AMFR/gp78 is mediated via interaction with INSIG1. High concentration of cholesterol and fatty acid results in Cys-279 oxidation, preventing ubiquitination at the same site, resulting in protein stabilization. Oxidized at Cys-279: high concentration of cholesterol and fatty acid induce reactive oxygen species, which oxidizes Cys-279, preventing ubiquitination at the same site, and resulting in protein stabilization.

It localises to the endoplasmic reticulum membrane. It carries out the reaction a sterol + a long-chain fatty acyl-CoA = a long-chain 3-hydroxysterol ester + CoA. The enzyme catalyses cholesterol + an acyl-CoA = a cholesterol ester + CoA. It catalyses the reaction cholesterol + (9Z)-octadecenoyl-CoA = cholesteryl (9Z-octadecenoate) + CoA. The catalysed reaction is (5Z,8Z,11Z,14Z,17Z)-eicosapentaenoyl-CoA + cholesterol = (5Z,8Z,11Z,14Z,17Z-eicosapentaenoyl)-cholesterol + CoA. It carries out the reaction (9Z,12Z,15Z)-octadecatrienoyl-CoA + cholesterol = (9Z,12Z,15Z-octadecatrienoyl)-cholesterol + CoA. The enzyme catalyses (5Z,8Z,11Z,14Z)-eicosatetraenoyl-CoA + cholesterol = cholesteryl (5Z,8Z,11Z,14Z)-eicosatetraenoate + CoA. Its function is as follows. Catalyzes the formation of fatty acid-cholesterol esters, which are less soluble in membranes than cholesterol. Plays a role in lipoprotein assembly and dietary cholesterol absorption. Utilizes oleoyl-CoA ((9Z)-octadecenoyl-CoA) and linolenoyl-CoA ((9Z,12Z,15Z)-octadecatrienoyl-CoA) as substrates. May provide cholesteryl esters for lipoprotein secretion from hepatocytes and intestinal mucosa. This chain is Sterol O-acyltransferase 2, found in Rattus norvegicus (Rat).